A 499-amino-acid chain; its full sequence is Rhamnogalacturonate lyase A (499 aa).

The first 20 residues, 1–20, serve as a signal peptide directing secretion; the sequence is MLSKTSLLSLLSLAAGVVNA. Cystine bridges form between Cys-49–Cys-92 and Cys-183–Cys-192.

This sequence belongs to the polysaccharide lyase 4 family.

It is found in the secreted. The catalysed reaction is Endotype eliminative cleavage of L-alpha-rhamnopyranosyl-(1-&gt;4)-alpha-D-galactopyranosyluronic acid bonds of rhamnogalacturonan I domains in ramified hairy regions of pectin leaving L-rhamnopyranose at the reducing end and 4-deoxy-4,5-unsaturated D-galactopyranosyluronic acid at the non-reducing end.. Its function is as follows. Pectinolytic enzymes consist of four classes of enzymes: pectin lyase, polygalacturonase, pectin methylesterase and rhamnogalacturonase. Degrades the rhamnogalacturonan I (RG-I) backbone of pectin. This Aspergillus niger protein is Rhamnogalacturonate lyase A (rglA).